The following is a 191-amino-acid chain: Amelogenin, X isoform (191 aa).

Positions 1-16 (MGTWILFACLLGAAFA) are cleaved as a signal peptide. S32 is subject to Phosphoserine. Positions 95 to 117 (IPQQPMMPVPGQHSMTPIQHHQP) are enriched in low complexity. The tract at residues 95-191 (IPQQPMMPVP…TDKTKREEVD (97 aa)) is disordered. Residues 118 to 171 (NLPPPAQQPYQPQPVQPQPHQPMQPQPPVHPMQPLPPQPPLPPMFPMQPLPPML) show a composition bias toward pro residues.

This sequence belongs to the amelogenin family. In terms of assembly, interacts with KRT5. Post-translationally, phosphorylated by FAM20C in vitro.

It localises to the secreted. Its subcellular location is the extracellular space. The protein localises to the extracellular matrix. Its function is as follows. Plays a role in biomineralization. Seems to regulate the formation of crystallites during the secretory stage of tooth enamel development. Thought to play a major role in the structural organization and mineralization of developing enamel. This chain is Amelogenin, X isoform (AMELX), found in Homo sapiens (Human).